A 132-amino-acid polypeptide reads, in one-letter code: Glycine cleavage system H protein (132 aa).

The 83-residue stretch at 24-106 (TVRVGITDFA…YGAGWLLDVQ (83 aa)) folds into the Lipoyl-binding domain. Position 65 is an N6-lipoyllysine (K65).

This sequence belongs to the GcvH family. The glycine cleavage system is composed of four proteins: P, T, L and H. The cofactor is (R)-lipoate.

The glycine cleavage system catalyzes the degradation of glycine. The H protein shuttles the methylamine group of glycine from the P protein to the T protein. The polypeptide is Glycine cleavage system H protein (Mycobacterium avium (strain 104)).